A 256-amino-acid polypeptide reads, in one-letter code: Phosphonates import ATP-binding protein PhnC (256 aa).

Residues 3 to 247 (LELKNISKTY…VLHKEIFTNV (245 aa)) form the ABC transporter domain. Residue 36–43 (GLSGAGKS) participates in ATP binding.

This sequence belongs to the ABC transporter superfamily. Phosphonates importer (TC 3.A.1.9.1) family. The complex is composed of two ATP-binding proteins (PhnC), two transmembrane proteins (PhnE) and a solute-binding protein (PhnD).

It localises to the cell inner membrane. It catalyses the reaction phosphonate(out) + ATP + H2O = phosphonate(in) + ADP + phosphate + H(+). Part of the ABC transporter complex PhnCDE involved in phosphonates import. Responsible for energy coupling to the transport system. This is Phosphonates import ATP-binding protein PhnC from Treponema denticola (strain ATCC 35405 / DSM 14222 / CIP 103919 / JCM 8153 / KCTC 15104).